The primary structure comprises 289 residues: MKLSFTKMHGAGNDFVVLDGYSRALPPLTEAQVRALANRHFGIGADQLLLVEKPTVDGADFKYRIFNCDGGEVEHCGNGARCFVKFVSDRGLTDKRSVRVQVMKGLITLTLQDNGEVVVDMGAPVFAPAQVPFDVSGLDGRAEGRDTLWPLDVGGATRWISAVSMGNPHAVQVVDDVEAYPVLEEGPLIERHARFPQRVNAGFMQIVSRHEVKLRVYERGAGETLACGTGACAAVAAGIRRGLLDSPVTVHTHGGTLTIGWDGARDEAAALMMAGPAATVFEGEIDLTA.

Substrate is bound by residues Asn-13, Gln-47, and Asn-67. Cys-76 functions as the Proton donor in the catalytic mechanism. Residues Gly-77–Asn-78, Asn-167, Asn-200, and Glu-218–Arg-219 each bind substrate. Cys-227 serves as the catalytic Proton acceptor. Gly-228–Thr-229 provides a ligand contact to substrate.

Belongs to the diaminopimelate epimerase family. As to quaternary structure, homodimer.

Its subcellular location is the cytoplasm. The catalysed reaction is (2S,6S)-2,6-diaminopimelate = meso-2,6-diaminopimelate. Its pathway is amino-acid biosynthesis; L-lysine biosynthesis via DAP pathway; DL-2,6-diaminopimelate from LL-2,6-diaminopimelate: step 1/1. Functionally, catalyzes the stereoinversion of LL-2,6-diaminopimelate (L,L-DAP) to meso-diaminopimelate (meso-DAP), a precursor of L-lysine and an essential component of the bacterial peptidoglycan. The chain is Diaminopimelate epimerase from Burkholderia ambifaria (strain ATCC BAA-244 / DSM 16087 / CCUG 44356 / LMG 19182 / AMMD) (Burkholderia cepacia (strain AMMD)).